A 270-amino-acid polypeptide reads, in one-letter code: 5'-nucleotidase SurE (270 aa).

Residues Asp-14, Asp-15, Ser-46, and Asn-104 each coordinate a divalent metal cation.

It belongs to the SurE nucleotidase family. A divalent metal cation serves as cofactor.

Its subcellular location is the cytoplasm. It catalyses the reaction a ribonucleoside 5'-phosphate + H2O = a ribonucleoside + phosphate. Functionally, nucleotidase that shows phosphatase activity on nucleoside 5'-monophosphates. This Microcystis aeruginosa (strain NIES-843 / IAM M-2473) protein is 5'-nucleotidase SurE.